Reading from the N-terminus, the 321-residue chain is CRISPR-associated aCascade subunit Cas7/Csa2 2 (321 aa).

Belongs to the CRISPR-associated protein Cas7/Cst2/DevR family. Subtype I-a/Apern subfamily. In terms of assembly, part of the aCascade ribonucleoprotein complex, minimally composed of Csa2 and Cas5a, which binds crRNA. Other possible components of aCascade in strain P1 are Cas6b (SSO1437) and Csa5 (SSO1443), while SSO1399, Cas5b (SSO1400) and SSO1401 have sometimes been seen weakly associated. Csa2 is probably the major RNA-binding subunit. The Csa2-Cas5a-crRNA complex also binds target DNA homologous to crRNA, probably forming an R-loop. Purified aCascade forms a filament about 6 nm in width.

Functionally, CRISPR (clustered regularly interspaced short palindromic repeat) is an adaptive immune system that provides protection against mobile genetic elements (viruses, transposable elements and conjugative plasmids). CRISPR clusters contain spacers, sequences complementary to antecedent mobile elements, and target invading nucleic acids. CRISPR clusters are transcribed and processed into CRISPR RNA (crRNA). The sequence is that of CRISPR-associated aCascade subunit Cas7/Csa2 2 (csa2b) from Saccharolobus solfataricus (strain ATCC 35092 / DSM 1617 / JCM 11322 / P2) (Sulfolobus solfataricus).